A 110-amino-acid polypeptide reads, in one-letter code: UPF0339 protein YegP (110 aa).

2 repeat units span residues 10–58 (SSDN…RYEK) and 61–109 (ASNG…VKDN).

The protein belongs to the UPF0339 family. Duplicated subfamily.

This Escherichia coli O6:H1 (strain CFT073 / ATCC 700928 / UPEC) protein is UPF0339 protein YegP (yegP).